The primary structure comprises 255 residues: Ribosomal RNA small subunit methyltransferase A (255 aa).

The S-adenosyl-L-methionine site is built by histidine 12, leucine 14, glycine 39, glutamate 60, aspartate 81, and asparagine 103.

This sequence belongs to the class I-like SAM-binding methyltransferase superfamily. rRNA adenine N(6)-methyltransferase family. RsmA subfamily.

It localises to the cytoplasm. It carries out the reaction adenosine(1518)/adenosine(1519) in 16S rRNA + 4 S-adenosyl-L-methionine = N(6)-dimethyladenosine(1518)/N(6)-dimethyladenosine(1519) in 16S rRNA + 4 S-adenosyl-L-homocysteine + 4 H(+). Specifically dimethylates two adjacent adenosines (A1518 and A1519) in the loop of a conserved hairpin near the 3'-end of 16S rRNA in the 30S particle. May play a critical role in biogenesis of 30S subunits. The chain is Ribosomal RNA small subunit methyltransferase A from Variovorax paradoxus (strain S110).